A 632-amino-acid polypeptide reads, in one-letter code: Probable potassium transport system protein Kup 1 (632 aa).

Helical transmembrane passes span 19–39 (LVLG…LYAL), 59–79 (VISM…VVFV), 110–130 (VLMM…VITP), 146–166 (PQLS…LFLI), 178–198 (FGPI…LHLV), 213–233 (ITFL…VFLV), 256–276 (WFVL…AMLL), 298–318 (MVLL…SGAF), 346–366 (IYLP…VISF), 373–393 (AAAY…LAAV), 403–423 (PALV…FFAA), and 428–448 (VAEG…LLMT).

This sequence belongs to the HAK/KUP transporter (TC 2.A.72) family.

The protein localises to the cell inner membrane. The enzyme catalyses K(+)(in) + H(+)(in) = K(+)(out) + H(+)(out). Its function is as follows. Transport of potassium into the cell. Likely operates as a K(+):H(+) symporter. This Cupriavidus necator (strain ATCC 17699 / DSM 428 / KCTC 22496 / NCIMB 10442 / H16 / Stanier 337) (Ralstonia eutropha) protein is Probable potassium transport system protein Kup 1.